The following is a 108-amino-acid chain: uncharacterized protein (108 aa).

A compositionally biased stretch (polar residues) spans 1–14 (MSDSNSRLVYSTET). The disordered stretch occupies residues 1–31 (MSDSNSRLVYSTETGRIDEPKAAPVRPKGDG). Positions 15-31 (GRIDEPKAAPVRPKGDG) are enriched in basic and acidic residues.

It belongs to the SUI1 family.

This is an uncharacterized protein from Escherichia coli (strain K12).